The sequence spans 205 residues: MKIGLLGKKIGMTQIFDPGGKALPVTILKLGPCLITDIKKMESHGYAAIQIGYVKVNGNKLNKAQIGHLNKYNMPLVKFLKEYKVASTENYQIGKWITVEDLSINQNISVSGTSIGKGFTGCIKRHNFSRGPMSHGSKNHRQPGSIGAGTTPGKVFAGKKMAGRMGGKKVTIQNLKIIDIKINNNLIIVKGSVPGKPGNIVSIYQ.

The disordered stretch occupies residues 130 to 150 (RGPMSHGSKNHRQPGSIGAGT).

It belongs to the universal ribosomal protein uL3 family. As to quaternary structure, part of the 50S ribosomal subunit.

It is found in the plastid. Its subcellular location is the chloroplast. Its function is as follows. One of the primary rRNA binding proteins, it binds directly near the 3'-end of the 23S rRNA, where it nucleates assembly of the 50S subunit. The protein is Large ribosomal subunit protein uL3c (rpl3) of Gracilaria tenuistipitata var. liui (Red alga).